The primary structure comprises 866 residues: E3 ubiquitin-protein ligase RNF216 (866 aa).

Disordered stretches follow at residues 46–117 (LVTP…NPRS), 131–161 (YTESDPLETQNQSSEDSETELLSNLGESAAL), and 211–240 (EFPGPAFPRPEPQQGGISGPSSPQPAHPLG). A compositionally biased stretch (acidic residues) spans 55–76 (EEEDLDDDVILTEDDSEDDYGE). Glycyl lysine isopeptide (Lys-Gly) (interchain with G-Cter in SUMO2) cross-links involve residues Leu80, Thr89, and Lys100. The segment covering 137-156 (LETQNQSSEDSETELLSNLG) has biased composition (polar residues). Residues Lys351 and Lys354 each participate in a glycyl lysine isopeptide (Lys-Gly) (interchain with G-Cter in SUMO2) cross-link. Ser419 is subject to Phosphoserine. Residues Lys425, Lys430, Lys448, Lys459, and Lys485 each participate in a glycyl lysine isopeptide (Lys-Gly) (interchain with G-Cter in SUMO2) cross-link. Positions 475 to 491 (VQQEQEFYEQKIKEMAE) form a coiled coil. Positions 511-728 (QLIECRCCYG…SPGAPCQECS (218 aa)) are TRIAD supradomain. Residues Cys515, Cys518, Cys537, Cys540, Cys605, and Cys608 each contribute to the Zn(2+) site. The RING-type 1 zinc finger occupies 515-564 (CRCCYGEFPFEELTQCADAHLFCKECLIRYAQEAVFGSGKLELSCMEGSC). The segment at 583 to 648 (YKYYERKAEE…LWKEHNGLTC (66 aa)) adopts an IBR-type zinc-finger fold. A Glycyl lysine isopeptide (Lys-Gly) (interchain with G-Cter in SUMO2) cross-link involves residue Lys619. Cys623, Cys628, Cys633, Cys636, His643, and Cys648 together coordinate Zn(2+). Residues Lys658 and Lys666 each participate in a glycyl lysine isopeptide (Lys-Gly) (interchain with G-Cter in SUMO2) cross-link. Zn(2+)-binding residues include Cys675 and Cys678. The segment at 675–703 (CHKCGTGLIKSEGCNRMSCRCGAQMCYLC) adopts an RING-type 2; atypical zinc-finger fold. Cys688 is an active-site residue. The Zn(2+) site is built by Cys693, Cys695, Cys700, Cys703, and His716. Ser719 bears the Phosphoserine; by MAPK1 mark. Cys724 serves as a coordination point for Zn(2+). A coiled-coil region spans residues 737-763 (TEDDEKLIEEIQKEAEEEQKRKNGENT). Residues Lys765 and Lys773 each participate in a glycyl lysine isopeptide (Lys-Gly) (interchain with G-Cter in SUMO2) cross-link.

In terms of assembly, interacts with UBE2L3 and to some extent with UBE2L6. Interacts with TRAF3, TLR3, TLR4, TLR5 and TLR9. Isoform 3/ZIN binds RIPK1. As to quaternary structure, (Microbial infection) Isoform 3/ZIN binds RIPK1 and HIV Vif. In terms of processing, auto-ubiquitinated. Phosphorylation at Ser-719 enhances acceptor ubiquitin binding and chain-type specificity towards 'Lys-63' di-ubiquitin but not di-ubiquitin with other linkage types. Ubiquitous, with the highest levels of expression in testis and peripheral blood leukocytes.

It localises to the cytoplasm. Its subcellular location is the cytoplasmic vesicle. It is found in the clathrin-coated vesicle. The catalysed reaction is S-ubiquitinyl-[E2 ubiquitin-conjugating enzyme]-L-cysteine + [acceptor protein]-L-lysine = [E2 ubiquitin-conjugating enzyme]-L-cysteine + N(6)-ubiquitinyl-[acceptor protein]-L-lysine.. It functions in the pathway protein modification; protein ubiquitination. With respect to regulation, allosterically activated by 'Lys-63'-linked di-ubiquitin. In terms of biological role, E3 ubiquitin ligase which accepts ubiquitin from specific E2 ubiquitin-conjugating enzymes, and then transfers it to substrates promoting their ubiquitination. Plays a role in the regulation of antiviral responses by promoting the degradation of TRAF3, TLR4 and TLR9. In turn, down-regulates NF-kappa-B and IRF3 activation as well as beta interferon production. Also participates in the regulation of autophagy by ubiquitinating BECN1 leading to its degradation and autophagy inhibition. Plays a role in ARC-dependent synaptic plasticity by mediating ARC ubiquitination resulting in its rapid proteasomal degradation. Plays aso an essential role in spermatogenesis and male fertility. Mechanistically, regulates meiosis by promoting the degradation of PRKACB through the ubiquitin-mediated lysosome pathway. Modulates the gonadotropin-releasing hormone signal pathway by affecting the stability of STAU2 that is required for the microtubule-dependent transport of neuronal RNA from the cell body to the dendrite. Functionally, inhibits TNF and IL-1 mediated activation of NF-kappa-B. Promotes TNF and RIP mediated apoptosis. The chain is E3 ubiquitin-protein ligase RNF216 (RNF216) from Homo sapiens (Human).